The sequence spans 156 residues: Probable cyclic pyranopterin monophosphate synthase (156 aa).

Residues 73–75 (MCH) and 109–110 (ME) each bind substrate. Aspartate 124 is an active-site residue.

The protein belongs to the MoaC family. Homohexamer; trimer of dimers.

The catalysed reaction is (8S)-3',8-cyclo-7,8-dihydroguanosine 5'-triphosphate = cyclic pyranopterin phosphate + diphosphate. It participates in cofactor biosynthesis; molybdopterin biosynthesis. In terms of biological role, catalyzes the conversion of (8S)-3',8-cyclo-7,8-dihydroguanosine 5'-triphosphate to cyclic pyranopterin monophosphate (cPMP). The sequence is that of Probable cyclic pyranopterin monophosphate synthase from Archaeoglobus fulgidus (strain ATCC 49558 / DSM 4304 / JCM 9628 / NBRC 100126 / VC-16).